Consider the following 421-residue polypeptide: Glucan 1,3-beta-glucosidase (421 aa).

A signal peptide spans 1–15 (MKLTKLVALAGAALA). The active-site Proton donor is the E213. Intrachain disulfides connect C296–C419 and C321–C347. E313 functions as the Nucleophile in the catalytic mechanism.

It belongs to the glycosyl hydrolase 5 (cellulase A) family.

The protein localises to the secreted. The enzyme catalyses Successive hydrolysis of beta-D-glucose units from the non-reducing ends of (1-&gt;3)-beta-D-glucans, releasing alpha-glucose.. The polypeptide is Glucan 1,3-beta-glucosidase (EXG1) (Yarrowia lipolytica (strain CLIB 122 / E 150) (Yeast)).